The chain runs to 249 residues: Tumor necrosis factor ligand superfamily member 12 (249 aa).

Residues 1–21 lie on the Cytoplasmic side of the membrane; that stretch reads MAARRSQRRRGRRGEPGTALL. Residues 22-45 form a helical; Signal-anchor for type II membrane protein membrane-spanning segment; sequence APLVLSLGLALACLGLLLVVVSLG. Over 46 to 249 the chain is Extracellular; sequence SWATLSAQEP…LTYFGLFQVH (204 aa). The interval 52–78 is disordered; sequence AQEPSQEELTAEDRREPPELNPQTEES. One can recognise a THD domain in the interval 107–248; that stretch reads IAAHYEVHPR…FLTYFGLFQV (142 aa). Residue asparagine 139 is glycosylated (N-linked (GlcNAc...) asparagine). Residues cysteine 191 and cysteine 210 are joined by a disulfide bond.

The protein belongs to the tumor necrosis factor family. Homotrimer. Interacts with the angiogenic factor AGGF1/VG5Q. The soluble form is produced from the membrane form by proteolytic processing. As to expression, widely expressed.

Its subcellular location is the cell membrane. The protein localises to the secreted. Functionally, binds to FN14 and possibly also to TNRFSF12/APO3. Weak inducer of apoptosis in some cell types. Mediates NF-kappa-B activation. Promotes angiogenesis and the proliferation of endothelial cells. Also involved in induction of inflammatory cytokines. Promotes IL8 secretion. The polypeptide is Tumor necrosis factor ligand superfamily member 12 (Tnfsf12) (Mus musculus (Mouse)).